We begin with the raw amino-acid sequence, 41 residues long: Large ribosomal subunit protein bL32c (41 aa).

The protein belongs to the bacterial ribosomal protein bL32 family.

It is found in the plastid. This is Large ribosomal subunit protein bL32c (rpl32) from Helicosporidium sp. subsp. Simulium jonesii (Green alga).